Here is a 142-residue protein sequence, read N- to C-terminus: Large ribosomal subunit protein uL11 (142 aa).

The protein belongs to the universal ribosomal protein uL11 family. As to quaternary structure, part of the ribosomal stalk of the 50S ribosomal subunit. Interacts with L10 and the large rRNA to form the base of the stalk. L10 forms an elongated spine to which L12 dimers bind in a sequential fashion forming a multimeric L10(L12)X complex. Post-translationally, one or more lysine residues are methylated.

Its function is as follows. Forms part of the ribosomal stalk which helps the ribosome interact with GTP-bound translation factors. The protein is Large ribosomal subunit protein uL11 of Mycoplasma mycoides subsp. mycoides SC (strain CCUG 32753 / NCTC 10114 / PG1).